The primary structure comprises 209 residues: Peroxiredoxin (209 aa).

The Thioredoxin domain maps to 2–156 (PLIGDKFPEM…IVRMIRAFRV (155 aa)). Cysteine 44 functions as the Cysteine sulfenic acid (-SOH) intermediate in the catalytic mechanism. Arginine 119 provides a ligand contact to substrate. A disulfide bridge links cysteine 198 with cysteine 204.

The protein belongs to the peroxiredoxin family. Prx6 subfamily. As to quaternary structure, homodecamer. Pentamer of dimers that assemble into a ring structure.

Its subcellular location is the cytoplasm. The enzyme catalyses a hydroperoxide + [thioredoxin]-dithiol = an alcohol + [thioredoxin]-disulfide + H2O. Thiol-specific peroxidase that catalyzes the reduction of hydrogen peroxide and organic hydroperoxides to water and alcohols, respectively. Plays a role in cell protection against oxidative stress by detoxifying peroxides. This is Peroxiredoxin from Methanothermobacter thermautotrophicus (strain ATCC 29096 / DSM 1053 / JCM 10044 / NBRC 100330 / Delta H) (Methanobacterium thermoautotrophicum).